Here is a 406-residue protein sequence, read N- to C-terminus: Nodal homolog (406 aa).

A signal peptide spans 1–18 (MAFLTAVLYLGFACISQG). Residues 19-281 (LPTWPDRVES…RVPGIRRHRR (263 aa)) constitute a propeptide that is removed on maturation. 3 N-linked (GlcNAc...) asparagine glycosylation sites follow: Asn71, Asn136, and Asn172. The tract at residues 195-222 (KERAERGSGMSNAEFIDAPGPSQQYNPH) is disordered. Disulfide bonds link Cys306–Cys372, Cys335–Cys403, and Cys339–Cys405. N-linked (GlcNAc...) asparagine glycosylation is present at Asn344.

The protein belongs to the TGF-beta family. In terms of assembly, homodimer; disulfide-linked. Interacts with, and is inhibited by cer1 and gdf10/bmp3b. As to expression, in the first phase of expression, localized to the vegetal region of the blastula. During gastrulation (stage 10.5), this expression disappears and instead becomes localized to the dorsal marginal zone, with enrichment in the organizer. During the second phase of expression in neurulae and tailbud embryos, expression restarts firstly in two symmetric patches near the posterior end of the notochord, and then in a large asymmetrical domain in the left lateral plate mesoderm.

The protein resides in the secreted. Its function is as follows. Cooperation and regulatory loops of multiple nodals are essential for mesendoderm patterning in early embryos. Essential for mesoderm formation and axial patterning during embryonic development. Activates the activin-like signaling pathway to induce dorsal and ventral mesoderm in animal cap ectoderm. In addition, also dorsalizes ventral marginal zone (VMZ) tissues during gastrulation. Acts in a downstream signaling cascade via cripto and cer1 to mediate cardiogenesis in embryonic mesoderm. Directs the orientation of the left-right axis by driving the left-specific gene cascade in the left lateral plate mesoderm. The chain is Nodal homolog from Xenopus laevis (African clawed frog).